A 147-amino-acid chain; its full sequence is Hemoglobin subunit gamma (147 aa).

A Globin domain is found at 3 to 147 (HFTVEEKAVI…VAIALAHKYH (145 aa)). Positions 64 and 93 each coordinate heme b.

The protein belongs to the globin family. Heterotetramer of two alpha chains and two gamma chains in fetal hemoglobin (Hb F). As to expression, red blood cells.

Gamma chains make up the fetal hemoglobin F, in combination with alpha chains. In Cheirogaleus medius (Fat-tailed dwarf lemur), this protein is Hemoglobin subunit gamma (HBG).